Reading from the N-terminus, the 326-residue chain is Malate dehydrogenase (326 aa).

11-17 (GAAGQIG) contributes to the NAD(+) binding site. Arg92 and Arg98 together coordinate substrate. NAD(+) is bound by residues Asn105, Gln112, and 129-131 (VGN). Substrate contacts are provided by Asn131 and Arg162. His187 serves as the catalytic Proton acceptor.

Belongs to the LDH/MDH superfamily. MDH type 2 family.

It catalyses the reaction (S)-malate + NAD(+) = oxaloacetate + NADH + H(+). Functionally, catalyzes the reversible oxidation of malate to oxaloacetate. The sequence is that of Malate dehydrogenase from Leptospira interrogans serogroup Icterohaemorrhagiae serovar Lai (strain 56601).